Here is a 309-residue protein sequence, read N- to C-terminus: GATA transcription factor 25 (309 aa).

Positions 1 to 35 are disordered; it reads MFGRHSIIPNNQIGTASASAGEDHVSASATSGHIP. Residues 8 to 18 are compositionally biased toward polar residues; sequence IPNNQIGTASA. The region spanning 77 to 112 is the Tify domain; it reads PPEGANQLTISFRGQVYVFDAVGADKVDAVLSLLGG. Positions 146-188 constitute a CCT domain; it reads RAQSLDRFRKKRNARCFEKKVRYGVRQEVALRMARNKGQFTSS. Over residues 187-202 the composition is skewed to polar residues; that stretch reads SSKMTDGAYNSGTDQD. The segment at 187–207 is disordered; that stretch reads SSKMTDGAYNSGTDQDSAQDD. The segment at 208–267 adopts a GATA-type zinc-finger fold; that stretch reads AHPEISCTHCGISSKCTPMMRRGPSGPRTLCNACGLFWANRGTLRDLSKKTEENQLALMK. Positions 290-309 are disordered; it reads EHTSMVSLANGDNSNLLGDH. Over residues 293–309 the composition is skewed to polar residues; it reads SMVSLANGDNSNLLGDH.

The protein belongs to the type IV zinc-finger family. Class C subfamily. In terms of tissue distribution, predominantly expressed in shoot apices, inflorescences and roots.

It is found in the nucleus. In terms of biological role, transcriptional activator that specifically binds 5'-GATA-3' or 5'-GAT-3' motifs within gene promoters. The protein is GATA transcription factor 25 (GATA25) of Arabidopsis thaliana (Mouse-ear cress).